Reading from the N-terminus, the 115-residue chain is Large ribosomal subunit protein uL18 (115 aa).

A disordered region spans residues 1 to 20; sequence MKYTKQEARKRRHYRVRSKV. The span at 8 to 18 shows a compositional bias: basic residues; that stretch reads ARKRRHYRVRS.

It belongs to the universal ribosomal protein uL18 family. Part of the 50S ribosomal subunit; part of the 5S rRNA/L5/L18/L25 subcomplex. Contacts the 5S and 23S rRNAs.

This is one of the proteins that bind and probably mediate the attachment of the 5S RNA into the large ribosomal subunit, where it forms part of the central protuberance. This chain is Large ribosomal subunit protein uL18, found in Mesoplasma florum (strain ATCC 33453 / NBRC 100688 / NCTC 11704 / L1) (Acholeplasma florum).